The following is a 237-amino-acid chain: Large ribosomal subunit protein uL1 (237 aa).

Belongs to the universal ribosomal protein uL1 family. As to quaternary structure, part of the 50S ribosomal subunit.

In terms of biological role, binds directly to 23S rRNA. The L1 stalk is quite mobile in the ribosome, and is involved in E site tRNA release. Functionally, protein L1 is also a translational repressor protein, it controls the translation of the L11 operon by binding to its mRNA. This chain is Large ribosomal subunit protein uL1, found in Nocardia farcinica (strain IFM 10152).